We begin with the raw amino-acid sequence, 367 residues long: Uroporphyrinogen decarboxylase (367 aa).

At Met-1 the chain carries N-acetylmethionine. Residues Arg-37, Ala-39, Arg-41, Arg-50, Asp-86, Tyr-164, Ser-219, and His-339 each contribute to the coproporphyrinogen I site. Coproporphyrinogen III is bound by residues Arg-37, Ala-39, and Arg-41. Residues Asp-86, Tyr-164, Ser-219, and His-339 each contribute to the coproporphyrinogen III site.

This sequence belongs to the uroporphyrinogen decarboxylase family. As to quaternary structure, homodimer.

It localises to the cytoplasm. The protein localises to the cytosol. It carries out the reaction uroporphyrinogen III + 4 H(+) = coproporphyrinogen III + 4 CO2. The enzyme catalyses uroporphyrinogen I + 4 H(+) = coproporphyrinogen I + 4 CO2. Its pathway is porphyrin-containing compound metabolism; protoporphyrin-IX biosynthesis; coproporphyrinogen-III from 5-aminolevulinate: step 4/4. Catalyzes the sequential decarboxylation of the four acetate side chains of uroporphyrinogen to form coproporphyrinogen and participates in the fifth step in the heme biosynthetic pathway. Isomer I or isomer III of uroporphyrinogen may serve as substrate, but only coproporphyrinogen III can ultimately be converted to heme. In vitro also decarboxylates pentacarboxylate porphyrinogen I. This chain is Uroporphyrinogen decarboxylase, found in Homo sapiens (Human).